The chain runs to 3625 residues: Spectinabilin polyketide synthase system protein NorA' (3625 aa).

The Ketosynthase family 3 (KS3) 1 domain occupies 33 to 459 (REPVAVVSMA…GTNAHVILEQ (427 aa)). Catalysis depends on for beta-ketoacyl synthase 1 activity residues cysteine 206, histidine 341, and histidine 381. Residues 564–881 (LVFPGQGSQW…SLGELFAGGR (318 aa)) form the Malonyl-CoA:ACP transacylase (MAT) 1 domain. Residues 930-1054 (HPWWGAVTEL…GTLTRTARPA (125 aa)) form an N-terminal hotdog fold 1 region. The PKS/mFAS DH 1 domain occupies 930–1200 (HPWWGAVTEL…VRPLTPGSGA (271 aa)). Residue histidine 962 is the Proton acceptor; for dehydratase activity 1 of the active site. Residues 1066–1200 (ADPLPVDRIY…VRPLTPGSGA (135 aa)) form a C-terminal hotdog fold 1 region. The active-site Proton donor; for dehydratase activity 1 is the aspartate 1125. The 178-residue stretch at 1443-1620 (GTVLVTGAAG…LSLAWGLWAE (178 aa)) folds into the Ketoreductase (KR) 1 domain. The Carrier 1 domain maps to 1722 to 1797 (GAVLETVRAQ…SLAAHLLGRL (76 aa)). Serine 1757 bears the O-(pantetheine 4'-phosphoryl)serine mark. The region spanning 1815–2231 (DEPIAIIGMA…GTNAHVVLEQ (417 aa)) is the Ketosynthase family 3 (KS3) 2 domain. Residues cysteine 1978, histidine 2113, and histidine 2153 each act as for beta-ketoacyl synthase 2 activity in the active site. Residues 2336–2656 (VFVFPGQGAQ…VAEAHTRGIA (321 aa)) enclose the Malonyl-CoA:ACP transacylase (MAT) 2 domain. Positions 2704–2829 (HPLLGARMEL…GLLSEEEPAT (126 aa)) are N-terminal hotdog fold 2. Residues 2704–2981 (HPLLGARMEL…ARPVPAGQLR (278 aa)) form the PKS/mFAS DH 2 domain. Residue histidine 2736 is the Proton acceptor; for dehydratase activity 2 of the active site. Residues 2842–2981 (AEPIELVGFY…ARPVPAGQLR (140 aa)) are C-terminal hotdog fold 2. The active-site Proton donor; for dehydratase activity 2 is the aspartate 2903. The Ketoreductase (KR) 2 domain occupies 3182–3361 (GTVLITGASG…QSLAWGLWSE (180 aa)). The region spanning 3462 to 3537 (RQLTDLVRAQ…ALAGHLSTRL (76 aa)) is the Carrier 2 domain. Serine 3497 bears the O-(pantetheine 4'-phosphoryl)serine mark.

In terms of assembly, the spectinabilin polyketide synthase complex is composed of 4 proteins, NorA, NorA', NorB and NorC. The complex comprises 6 modules with a total of 28 catalytic domains catalyzing 7 chain elongations. NorA comprises one module, NorA' two modules, NorB one module and NorC two modules. Pantetheine 4'-phosphate serves as cofactor.

The enzyme catalyses 4-nitrobenzoyl-CoA + 6 (S)-methylmalonyl-CoA + malonyl-CoA + 6 NADPH + 12 H(+) = demethyldeoxyspectinabilin + 7 CO2 + 6 NADP(+) + 8 CoA + 5 H2O. Its pathway is antibiotic biosynthesis. It functions in the pathway polyketide biosynthesis. Functionally, component of a type I modular polyketide synthase (PKS) that generates the backbone of the antibiotic spectinabilin (also known as neoaureothin), a nitroaryl-substituted polyketide metabolite. This PKS system accepts the unusual starter unit 4-nitrobenzoyl-CoA and extends it by 6 molecules of (S)-methylmalonyl-CoA and a single molecule of malonyl-CoA. The chain is Spectinabilin polyketide synthase system protein NorA' from Streptomyces orinoci (Streptoverticillium orinoci).